Here is a 2703-residue protein sequence, read N- to C-terminus: Neurogenic locus Notch protein (2703 aa).

The N-terminal stretch at 1–52 is a signal peptide; the sequence is MQSQRSRRRSRAPNTWICFWINKMHAVASLPASLPLLLLTLAFANLPNTVRG. The Extracellular segment spans residues 53 to 1745; the sequence is TDTALVAASC…NGEPPANVKY (1693 aa). EGF-like domains lie at 58 to 95, 96 to 136, 139 to 176, and 177 to 215; these read VAAS…DYCE, HRNP…SLCE, VPNA…ERCE, and TKNL…DTCS. Intrachain disulfides connect cysteine 62–cysteine 73, cysteine 67–cysteine 83, cysteine 85–cysteine 94, cysteine 100–cysteine 111, cysteine 105–cysteine 124, cysteine 126–cysteine 135, cysteine 143–cysteine 154, cysteine 148–cysteine 164, cysteine 166–cysteine 175, cysteine 181–cysteine 192, cysteine 186–cysteine 203, cysteine 205–cysteine 214, cysteine 221–cysteine 232, cysteine 226–cysteine 241, cysteine 243–cysteine 252, cysteine 259–cysteine 270, cysteine 264–cysteine 279, cysteine 281–cysteine 290, cysteine 297–cysteine 308, cysteine 302–cysteine 317, cysteine 319–cysteine 328, cysteine 335–cysteine 349, cysteine 343–cysteine 358, and cysteine 360–cysteine 369. O-linked (Fuc...) threonine glycosylation is present at threonine 72. A glycan (O-linked (Fuc...) threonine) is linked at threonine 110. O-linked (Fuc...) threonine glycosylation occurs at threonine 153. Serine 183 carries O-linked (Glc...) serine glycosylation. O-linked (Fuc...) threonine glycosylation is present at threonine 191. O-linked (GlcNAc...) threonine glycosylation occurs at threonine 210. The EGF-like 5; calcium-binding domain occupies 217-253; it reads DIEECQSNPCKYGGTCVNTHGSYQCMCPTGYTGKDCD. Serine 223 is a glycosylation site (O-linked (Glc...) serine). Threonine 231 carries O-linked (Fuc...) threonine glycosylation. An EGF-like 6 domain is found at 255 to 291; it reads KYKPCSPSPCQNGGICRSNGLSYECKCPKGFEGKNCE. The 37-residue stretch at 293-329 folds into the EGF-like 7; calcium-binding domain; sequence NYDDCLGHLCQNGGTCIDGISDYTCRCPPNFTGRFCQ. Threonine 307 is a glycosylation site (O-linked (Fuc...) threonine). The N-linked (GlcNAc...) asparagine glycan is linked to asparagine 322. The 40-residue stretch at 331 to 370 folds into the EGF-like 8; calcium-binding domain; the sequence is DVDECAQRDHPVCQNGATCTNTHGSYSCICVNGWAGLDCS. Threonine 348 carries O-linked (Fuc...) threonine glycosylation. N-linked (GlcNAc...) asparagine glycosylation occurs at asparagine 371. The EGF-like 9; calcium-binding domain maps to 372–408; the sequence is NTDDCKQAACFYGATCIDGVGSFYCQCTKGKTGLLCH. Cystine bridges form between cysteine 376–cysteine 387, cysteine 381–cysteine 396, cysteine 398–cysteine 407, cysteine 413–cysteine 424, cysteine 418–cysteine 435, cysteine 437–cysteine 446, cysteine 453–cysteine 465, and cysteine 459–cysteine 474. O-linked (Fuc...) threonine glycosylation occurs at threonine 386. The 39-residue stretch at 409-447 folds into the EGF-like 10 domain; sequence LDDACTSNPCHADAICDTSPINGSYACSCATGYKGVDCS. Serine 427 carries O-linked (Glc...) serine glycosylation. Asparagine 430 carries N-linked (GlcNAc...) asparagine glycosylation. Positions 449–486 constitute an EGF-like 11; calcium-binding domain; sequence DIDECDQGSPCEHNGICVNTPGSYRCNCSQGFTGPRCE. The N-linked (GlcNAc...) asparagine glycan is linked to asparagine 475. Disulfide bonds link cysteine 476–cysteine 485, cysteine 492–cysteine 503, cysteine 497–cysteine 512, cysteine 514–cysteine 523, cysteine 530–cysteine 541, cysteine 535–cysteine 550, cysteine 552–cysteine 561, cysteine 568–cysteine 579, cysteine 573–cysteine 588, cysteine 590–cysteine 599, cysteine 606–cysteine 616, cysteine 611–cysteine 625, cysteine 627–cysteine 636, cysteine 643–cysteine 654, cysteine 648–cysteine 663, cysteine 665–cysteine 674, cysteine 681–cysteine 692, cysteine 686–cysteine 701, cysteine 703–cysteine 712, cysteine 719–cysteine 730, cysteine 724–cysteine 739, cysteine 741–cysteine 750, cysteine 757–cysteine 768, cysteine 762–cysteine 777, cysteine 779–cysteine 788, cysteine 795–cysteine 806, cysteine 800–cysteine 815, cysteine 817–cysteine 826, cysteine 833–cysteine 844, cysteine 838–cysteine 853, cysteine 855–cysteine 864, cysteine 871–cysteine 882, cysteine 876–cysteine 893, cysteine 895–cysteine 904, cysteine 911–cysteine 923, cysteine 917–cysteine 932, cysteine 934–cysteine 943, cysteine 950–cysteine 961, cysteine 955–cysteine 970, cysteine 972–cysteine 981, cysteine 988–cysteine 999, cysteine 993–cysteine 1008, cysteine 1010–cysteine 1019, cysteine 1026–cysteine 1037, cysteine 1031–cysteine 1046, cysteine 1048–cysteine 1057, cysteine 1064–cysteine 1075, cysteine 1069–cysteine 1084, cysteine 1086–cysteine 1095, cysteine 1102–cysteine 1113, cysteine 1107–cysteine 1122, cysteine 1124–cysteine 1133, cysteine 1155–cysteine 1160, cysteine 1171–cysteine 1180, cysteine 1187–cysteine 1198, cysteine 1192–cysteine 1207, cysteine 1209–cysteine 1218, cysteine 1225–cysteine 1236, cysteine 1230–cysteine 1245, cysteine 1247–cysteine 1256, cysteine 1263–cysteine 1274, cysteine 1268–cysteine 1283, cysteine 1285–cysteine 1294, cysteine 1301–cysteine 1314, cysteine 1306–cysteine 1323, cysteine 1325–cysteine 1334, cysteine 1341–cysteine 1352, cysteine 1346–cysteine 1361, cysteine 1363–cysteine 1372, cysteine 1379–cysteine 1389, cysteine 1384–cysteine 1400, cysteine 1402–cysteine 1411, cysteine 1419–cysteine 1430, cysteine 1424–cysteine 1439, cysteine 1441–cysteine 1450, cysteine 1482–cysteine 1505, cysteine 1487–cysteine 1500, and cysteine 1496–cysteine 1512. The O-linked (GlcNAc...) threonine glycan is linked to threonine 481. Residues 488-524 form the EGF-like 12; calcium-binding domain; it reads NINECESHPCQNEGSCLDDPGTFRCVCMPGFTGTQCE. An O-linked (Glc...) serine glycan is attached at serine 494. O-linked (Fuc...) serine glycosylation is present at serine 502. Threonine 519 is a glycosylation site (O-linked (GlcNAc...) threonine). One can recognise an EGF-like 13; calcium-binding domain in the interval 526 to 562; the sequence is DIDECQSNPCLNDGTCHDKINGFKCSCALGFTGARCQ. O-linked (Glc...) serine glycosylation is present at serine 532. The region spanning 564-600 is the EGF-like 14; calcium-binding domain; sequence NIDDCQSQPCRNRGICHDSIAGYSCECPPGYTGTSCE. O-linked (Glc...) serine glycosylation occurs at serine 570. Threonine 595 is a glycosylation site (O-linked (GlcNAc...) threonine). Residues 602–637 enclose the EGF-like 15; calcium-binding domain; sequence NINDCDSNPCHRGKCIDDVNSFKCLCDPGYTGYICQ. O-linked (Glc...) serine glycosylation is present at serine 608. The EGF-like 16; calcium-binding domain maps to 639–675; it reads QINECESNPCQFDGHCQDRVGSYYCQCQAGTSGKNCE. Serine 645 carries O-linked (Glc...) serine glycosylation. The region spanning 677-713 is the EGF-like 17; calcium-binding domain; it reads NVNECHSNPCNNGATCIDGINSYKCQCVPGFTGQHCE. O-linked (Glc...) serine glycosylation is present at serine 683. An O-linked (Fuc...) threonine glycan is attached at threonine 691. Residues 715–751 enclose the EGF-like 18; calcium-binding domain; sequence NVDECISSPCANNGVCIDQVNGYKCECPRGFYDAHCL. Residue serine 721 is glycosylated (O-linked (Glc...) serine). An EGF-like 19; calcium-binding domain is found at 753–789; it reads DVDECASNPCVNEGRCEDGINEFICHCPPGYTGKRCE. Residue serine 759 is glycosylated (O-linked (Glc...) serine). Residues 791–827 enclose the EGF-like 20; calcium-binding domain; that stretch reads DIDECSSNPCQHGGTCYDKLNAFSCQCMPGYTGQKCE. Serine 797 is a glycosylation site (O-linked (Glc...) serine). O-linked (Fuc...) threonine glycosylation occurs at threonine 805. A glycan (O-linked (GlcNAc...) threonine) is linked at threonine 822. Positions 829 to 865 constitute an EGF-like 21; calcium-binding domain; it reads NIDDCVTNPCGNGGTCIDKVNGYKCVCKVPFTGRDCE. Threonine 843 carries O-linked (Fuc...) threonine glycosylation. In terms of domain architecture, EGF-like 22 spans 867 to 905; sequence KMDPCASNRCKNEAKCTPSSNFLDFSCTCKLGYTGRYCD. The EGF-like 23; calcium-binding domain occupies 907–944; it reads DIDECSLSSPCRNGASCLNVPGSYRCLCTKGYEGRDCA. A glycan (O-linked (Fuc...) serine) is linked at serine 922. The region spanning 946 to 982 is the EGF-like 24; calcium-binding domain; it reads NTDDCASFPCQNGGTCLDGIGDYSCLCVDGFDGKHCE. Serine 952 carries an O-linked (Glc...) serine glycan. Residue threonine 960 is glycosylated (O-linked (Fuc...) threonine). An EGF-like 25 domain is found at 984–1020; the sequence is DINECLSQPCQNGATCSQYVNSYTCTCPLGFSGINCQ. Residue serine 990 is glycosylated (O-linked (Glc...) serine). An O-linked (Fuc...) threonine glycan is attached at threonine 998. An EGF-like 26; calcium-binding domain is found at 1022 to 1058; it reads NDEDCTESSCLNGGSCIDGINGYNCSCLAGYSGANCQ. O-linked (Fuc...) serine glycosylation occurs at serine 1036. A glycan (N-linked (GlcNAc...) asparagine) is linked at asparagine 1045. 3 EGF-like domains span residues 1060-1096, 1098-1134, and 1136-1181; these read KLNK…KQCS, YVDW…KLCD, and QTIS…SYCQ. An O-linked (Glc...) serine glycan is attached at serine 1066. An O-linked (Fuc...) threonine glycan is attached at threonine 1074. An O-linked (Fuc...) threonine glycan is attached at threonine 1112. An N-linked (GlcNAc...) asparagine glycan is attached at asparagine 1157. The region spanning 1183–1219 is the EGF-like 30; calcium-binding domain; it reads EIDECQSQPCQNGGTCRDLIGAYECQCRQGFQGQNCE. Serine 1189 carries O-linked (Glc...) serine glycosylation. Threonine 1197 is a glycosylation site (O-linked (Fuc...) threonine). The 37-residue stretch at 1221-1257 folds into the EGF-like 31; calcium-binding domain; the sequence is NIDDCAPNPCQNGGTCHDRVMNFSCSCPPGTMGIICE. Threonine 1235 is a glycosylation site (O-linked (Fuc...) threonine). Residue asparagine 1242 is glycosylated (N-linked (GlcNAc...) asparagine). One can recognise an EGF-like 32; calcium-binding domain in the interval 1259 to 1295; that stretch reads NKDDCKPGACHNNGSCIDRVGGFECVCQPGFVGARCE. Asparagine 1271 carries N-linked (GlcNAc...) asparagine glycosylation. Residue serine 1273 is glycosylated (O-linked (Fuc...) serine). EGF-like domains follow at residues 1297–1335, 1337–1373, 1375–1412, and 1415–1451; these read DINE…RHCE, KVDF…KNCE, SGQD…EHCE, and TLDE…KRCD. Serine 1303 carries an O-linked (Glc...) serine glycan. An O-linked (Glc...) serine glycan is attached at serine 1381. LNR repeat units follow at residues 1482 to 1521, 1522 to 1557, and 1559 to 1599; these read CDKR…PWAN, CTAN…RKLK, and CDSL…TQSP. Residue asparagine 1521 is glycosylated (N-linked (GlcNAc...) asparagine). Disulfide bonds link cysteine 1522/cysteine 1545, cysteine 1527/cysteine 1540, cysteine 1536/cysteine 1552, cysteine 1559/cysteine 1585, cysteine 1567/cysteine 1580, and cysteine 1576/cysteine 1592. N-linked (GlcNAc...) asparagine glycosylation is found at asparagine 1594 and asparagine 1627. Residues 1746–1766 traverse the membrane as a helical segment; that stretch reads VITGIILVIIALAFFGMVLST. At 1767–2703 the chain is on the cytoplasmic side; the sequence is QRKRAHGVTW…ANKGSEAIYI (937 aa). A disordered region spans residues 1810 to 1850; that stretch reads QSQGVGQPGAHWSDDESDMPLPKRQRSDPVSGVGLGNNGGY. ANK repeat units follow at residues 1901-1945, 1950-1979, 1983-2013, 2017-2046, 2050-2079, 2083-2112, and 2116-2139; these read CGLT…ELNA, TGET…DANC, TGRT…NLNA, DGTT…DINA, SGKT…NRDA, KDET…NREI, and MDRL…LDEH. The disordered stretch occupies residues 2172-2257; sequence TVISAGNGGN…LTGGVSGVPG (86 aa). Residues 2228-2238 show a composition bias toward low complexity; sequence KKTSAASKKAA. The tract at residues 2325–2328 is interaction with Nedd4; sequence PPSY. Disordered stretches follow at residues 2399 to 2452, 2488 to 2524, 2579 to 2620, and 2632 to 2703; these read SGAG…PTSP, GGGG…APPQ, LDLN…PSSQ, and PSSQ…AIYI. Residues 2414–2429 show a composition bias toward polar residues; the sequence is PYSNQSPPHSVQSSLA. At serine 2447 the chain carries Phosphoserine. Over residues 2488-2497 the composition is skewed to gly residues; that stretch reads GGGGGGGVGQ. Over residues 2598–2619 the composition is skewed to low complexity; that stretch reads PPSIQSSMSGSSPSTNMLSPSS. Residues 2632-2653 show a composition bias toward polar residues; it reads PSSQHSGGHTPQHLVQTLDSYP. Over residues 2659–2675 the composition is skewed to low complexity; sequence SPGHWSSSSPRSNSDWS. Residues 2677 to 2687 show a composition bias toward polar residues; sequence GVQSPAANNLY.

The protein belongs to the NOTCH family. As to quaternary structure, homomer. Interacts with Su(H) when activated. Interacts with Dx via its ANK repeats. Interacts with Delta via the EGF repeats and the Delta EGF repeats. Interacts with Nedd4 and Su(dx). Interacts with O-fut1; the interaction glycosylates N and transports N to early endosomes. Interacts with Akap200; the interaction stabilizes N/Notch protein levels by preventing Cbl-mediated ubiquitination and subsequent lysosomal degradation of N/Notch. Post-translationally, upon binding its ligands such as Delta or Serrate, it is cleaved (S2 cleavage) in its extracellular domain, close to the transmembrane domain. S2 cleavage is probably mediated by Kuz. It is then cleaved (S3 cleavage) downstream of its transmembrane domain, releasing it from the cell membrane. S3 cleavage requires Psn. In terms of processing, O-glycosylated. Three forms of O-glycosylation (O-fucosylation, O-glucosylation and O-GlcNAcylation) are detected. O-fucosylated by O-fut1 and fng in the EGF repeat domain inhibits both Serrate/Ser- and Delta/Dl-binding. O-glucosylation by rumi in the endoplasmic reticulum is necessary for correct folding and signaling. Ubiquitinated by various ubiquitin ligases; which promotes ligand-independent endocytosis and proteasomal degradation. Ubiquitinated by Nedd4. May also be ubiquitinated by Su(dx) and Cbl. Mono-ubiquitinated, possibly by dx/deltex; this may be involved in the ESCRT-III mediated targeting to multivesicular bodies.

It is found in the cell membrane. It localises to the endosome. The protein resides in the multivesicular body. The protein localises to the nucleus. Essential signaling protein which has a major role in many developmental processes. Functions as a receptor for membrane-bound ligands Delta and Serrate to regulate cell-fate determination. Upon ligand activation, and releasing from the cell membrane, the Notch intracellular domain (NICD) forms a transcriptional activator complex with Su(H) (Suppressor of hairless) and activates genes of the E(spl) complex. Regulates oogenesis, the differentiation of the ectoderm and the development of the central and peripheral nervous system, eye, wing disk, muscles and segmental appendages such as antennae and legs, through lateral inhibition or induction. Regulates neuroblast self-renewal, identity and proliferation through the regulation of bHLH-O proteins; in larval brains, involved in the maintenance of type II neuroblast self-renewal and identity by suppressing erm expression together with pnt; might also regulate dpn expression through the activation of the transcriptional regulator Su(H). Targeted for ESCRT-mediated endosomal sequestration and lysosomal degradation by various E3 ubiquitin ligases to regulate the Notch signaling pathway. Can undergo ligand-dependent and non-canonical ligand-independent activation. Ligand-independent activation is dependent on endosome acidification and probably occurs in late endosomes or lysosome. Ectopic ligand-independent activation occurs when disruption of the endolysosomal pathway, particularly of the ESCRT-III complex, prevents sequestration of the receptor in intraluminal vesicles of multivesicular bodies. The protein is Neurogenic locus Notch protein of Drosophila melanogaster (Fruit fly).